Consider the following 139-residue polypeptide: Prostate-associated microseminoprotein (139 aa).

Positions 1-35 (MALRMLWAGQAKGILGGWRTICLVVSLFLQHPGVS) are cleaved as a signal peptide. 5 cysteine pairs are disulfide-bonded: cysteine 38-cysteine 78, cysteine 46-cysteine 69, cysteine 64-cysteine 100, cysteine 67-cysteine 77, and cysteine 91-cysteine 114. The segment at 116 to 139 (GGGPDLEWGSANTPAPGASAPHSS) is disordered.

It belongs to the beta-microseminoprotein family.

The protein localises to the secreted. Functionally, acts as a ligand for C-C chemokine receptor CCR2. Signals through binding and activation of CCR2 and induces a strong chemotactic response and mobilization of intracellular calcium ions. Exhibits a chemotactic activity for monocytes and lymphocytes but not neutrophils. In Mus musculus (Mouse), this protein is Prostate-associated microseminoprotein (Msmp).